The following is a 293-amino-acid chain: Membrane protein RL13 (293 aa).

The N-terminal stretch at 1–19 (MHWHLAITWTVIILTFSEC) is a signal peptide. A helical membrane pass occupies residues 245-265 (IPLGIHAVWAGIVVSVALIAL).

The protein localises to the virion membrane. In terms of biological role, may play a role in modifying tropism or in modulating cell signaling during virus entry. Since RL13 expression severely impairs HCMV replication in epithelial cell cultures, it may act as a regulator promoting persistence by suppressing the switch to fully lytic infection. The sequence is that of Membrane protein RL13 (RL13) from Human cytomegalovirus (strain Merlin) (HHV-5).